Reading from the N-terminus, the 253-residue chain is Probable transcriptional regulatory protein Tery_2125 (253 aa).

It belongs to the TACO1 family.

It localises to the cytoplasm. This is Probable transcriptional regulatory protein Tery_2125 from Trichodesmium erythraeum (strain IMS101).